The primary structure comprises 468 residues: Shaggy-related protein kinase theta (468 aa).

Disordered regions lie at residues 1 to 53 (MNVM…DQST) and 91 to 112 (HANR…CGTE). Positions 134-418 (YMAQRVVGTG…ALEACAHPFF (285 aa)) constitute a Protein kinase domain. Residues 140 to 148 (VGTGSFGVV) and Lys163 contribute to the ATP site. The Proton acceptor role is filled by Asp259. Phosphotyrosine is present on Tyr294.

The protein belongs to the protein kinase superfamily. CMGC Ser/Thr protein kinase family. GSK-3 subfamily. Post-translationally, autophosphorylated mainly on threonine and serine residues. In developing pollen.

It catalyses the reaction L-seryl-[protein] + ATP = O-phospho-L-seryl-[protein] + ADP + H(+). The enzyme catalyses L-threonyl-[protein] + ATP = O-phospho-L-threonyl-[protein] + ADP + H(+). Functionally, may mediate extracellular signals to regulate transcription in differentiating cells. In Brassica napus (Rape), this protein is Shaggy-related protein kinase theta.